We begin with the raw amino-acid sequence, 253 residues long: Proproteinase E (253 aa).

A propeptide spans 1–11 (FSQPFSRPSSR) (activation peptide). In terms of domain architecture, Peptidase S1 spans 12–251 (VVNGEDAVPY…FIDWIDETIA (240 aa)). 5 disulfides stabilise this stretch: cysteine 41–cysteine 57, cysteine 100–cysteine 103, cysteine 140–cysteine 206, cysteine 171–cysteine 187, and cysteine 196–cysteine 227.

It belongs to the peptidase S1 family. Monomer. The zymogen is secreted as a ternary complex composed of procarboxypeptidase A, chymotrypsinogen C and proproteinase E. As to expression, pancreas.

Its subcellular location is the secreted. It is found in the extracellular space. In terms of biological role, may protect procarboxypeptidase A against denaturation in the acidic environment of the ruminant duodenum. The polypeptide is Proproteinase E (Bos taurus (Bovine)).